The sequence spans 205 residues: Large ribosomal subunit protein uL4 (205 aa).

A disordered region spans residues 56 to 78; that stretch reads VSGTTAKPYRQKHTGRARQGSLR.

The protein belongs to the universal ribosomal protein uL4 family. Part of the 50S ribosomal subunit.

Its function is as follows. One of the primary rRNA binding proteins, this protein initially binds near the 5'-end of the 23S rRNA. It is important during the early stages of 50S assembly. It makes multiple contacts with different domains of the 23S rRNA in the assembled 50S subunit and ribosome. In terms of biological role, forms part of the polypeptide exit tunnel. This chain is Large ribosomal subunit protein uL4, found in Ehrlichia ruminantium (strain Gardel).